The sequence spans 129 residues: Probable tautomerase YrdN (129 aa).

Pro-2 functions as the Proton acceptor; via imino nitrogen in the catalytic mechanism.

Belongs to the 4-oxalocrotonate tautomerase family.

In terms of biological role, putative target of GltR. The sequence is that of Probable tautomerase YrdN (yrdN) from Bacillus subtilis (strain 168).